A 342-amino-acid chain; its full sequence is Ferredoxin--NADP reductase (342 aa).

FAD is bound by residues Cys17, Asp36, Gln44, Tyr49, Val89, Phe124, Asp289, and Thr330.

This sequence belongs to the ferredoxin--NADP reductase type 2 family. Homodimer. It depends on FAD as a cofactor.

It catalyses the reaction 2 reduced [2Fe-2S]-[ferredoxin] + NADP(+) + H(+) = 2 oxidized [2Fe-2S]-[ferredoxin] + NADPH. This Nitrobacter hamburgensis (strain DSM 10229 / NCIMB 13809 / X14) protein is Ferredoxin--NADP reductase.